Consider the following 505-residue polypeptide: 2,3-bisphosphoglycerate-independent phosphoglycerate mutase (505 aa).

Mn(2+)-binding residues include Asp-11 and Ser-61. Ser-61 acts as the Phosphoserine intermediate in catalysis. Substrate-binding positions include His-122, 152 to 153 (RD), Arg-183, Arg-189, 259 to 262 (RTDR), and Lys-332. Positions 399, 403, 440, 441, and 458 each coordinate Mn(2+).

The protein belongs to the BPG-independent phosphoglycerate mutase family. Monomer. Mn(2+) serves as cofactor.

The catalysed reaction is (2R)-2-phosphoglycerate = (2R)-3-phosphoglycerate. It participates in carbohydrate degradation; glycolysis; pyruvate from D-glyceraldehyde 3-phosphate: step 3/5. Its function is as follows. Catalyzes the interconversion of 2-phosphoglycerate and 3-phosphoglycerate. In Flavobacterium psychrophilum (strain ATCC 49511 / DSM 21280 / CIP 103535 / JIP02/86), this protein is 2,3-bisphosphoglycerate-independent phosphoglycerate mutase.